A 141-amino-acid chain; its full sequence is HTH-type transcriptional repressor NsrR (141 aa).

In terms of domain architecture, HTH rrf2-type spans 2–129 (QLTNFTDYGL…DNYTLADLVE (128 aa)). The segment at residues 28–51 (ISEVTDVYGVSRNHMVKIINQLSR) is a DNA-binding region (H-T-H motif). [2Fe-2S] cluster is bound by residues Cys91, Cys96, and Cys102.

Requires [2Fe-2S] cluster as cofactor.

Its function is as follows. Nitric oxide-sensitive repressor of genes involved in protecting the cell against nitrosative stress. May require iron for activity. The protein is HTH-type transcriptional repressor NsrR of Shigella boydii serotype 18 (strain CDC 3083-94 / BS512).